The chain runs to 378 residues: Holliday junction branch migration complex subunit RuvB 1 (378 aa).

Positions 1 to 12 are enriched in polar residues; sequence MAIISSRDTGQN. Residues 1 to 62 form a disordered region; the sequence is MAIISSRDTG…PGEAQEESLR (62 aa). The large ATPase domain (RuvB-L) stretch occupies residues 13 to 222; that stretch reads AEGPKRRQQK…FGHVQRLRFY (210 aa). ATP is bound by residues Leu61, Arg62, Gly103, Lys106, Thr107, Thr108, 169-171, Arg212, Tyr222, and Arg259; that span reads EDF. Residue Thr107 participates in Mg(2+) binding. The tract at residues 223 to 293 is small ATPAse domain (RuvB-S); the sequence is EPHELVQIVL…VAAAALELFQ (71 aa). The segment at 296 to 378 is head domain (RuvB-H); that stretch reads PMGLDWIDRK…EAQSPLPLWS (83 aa). DNA contacts are provided by Arg351 and Arg356.

The protein belongs to the RuvB family. In terms of assembly, homohexamer. Forms an RuvA(8)-RuvB(12)-Holliday junction (HJ) complex. HJ DNA is sandwiched between 2 RuvA tetramers; dsDNA enters through RuvA and exits via RuvB. An RuvB hexamer assembles on each DNA strand where it exits the tetramer. Each RuvB hexamer is contacted by two RuvA subunits (via domain III) on 2 adjacent RuvB subunits; this complex drives branch migration. In the full resolvosome a probable DNA-RuvA(4)-RuvB(12)-RuvC(2) complex forms which resolves the HJ.

It is found in the cytoplasm. The catalysed reaction is ATP + H2O = ADP + phosphate + H(+). Functionally, the RuvA-RuvB-RuvC complex processes Holliday junction (HJ) DNA during genetic recombination and DNA repair, while the RuvA-RuvB complex plays an important role in the rescue of blocked DNA replication forks via replication fork reversal (RFR). RuvA specifically binds to HJ cruciform DNA, conferring on it an open structure. The RuvB hexamer acts as an ATP-dependent pump, pulling dsDNA into and through the RuvAB complex. RuvB forms 2 homohexamers on either side of HJ DNA bound by 1 or 2 RuvA tetramers; 4 subunits per hexamer contact DNA at a time. Coordinated motions by a converter formed by DNA-disengaged RuvB subunits stimulates ATP hydrolysis and nucleotide exchange. Immobilization of the converter enables RuvB to convert the ATP-contained energy into a lever motion, pulling 2 nucleotides of DNA out of the RuvA tetramer per ATP hydrolyzed, thus driving DNA branch migration. The RuvB motors rotate together with the DNA substrate, which together with the progressing nucleotide cycle form the mechanistic basis for DNA recombination by continuous HJ branch migration. Branch migration allows RuvC to scan DNA until it finds its consensus sequence, where it cleaves and resolves cruciform DNA. In Synechococcus sp. (strain JA-3-3Ab) (Cyanobacteria bacterium Yellowstone A-Prime), this protein is Holliday junction branch migration complex subunit RuvB 1.